Here is a 379-residue protein sequence, read N- to C-terminus: Homoserine O-succinyltransferase (379 aa).

In terms of domain architecture, AB hydrolase-1 spans Asn51–Leu360. The Nucleophile role is filled by Ser157. Arg227 is a substrate binding site. Active-site residues include Asp323 and His356. Position 357 (Asp357) interacts with substrate.

The protein belongs to the AB hydrolase superfamily. MetX family. As to quaternary structure, homodimer.

It is found in the cytoplasm. The catalysed reaction is L-homoserine + succinyl-CoA = O-succinyl-L-homoserine + CoA. Its pathway is amino-acid biosynthesis; L-methionine biosynthesis via de novo pathway; O-succinyl-L-homoserine from L-homoserine: step 1/1. Functionally, transfers a succinyl group from succinyl-CoA to L-homoserine, forming succinyl-L-homoserine. The protein is Homoserine O-succinyltransferase of Pseudomonas paraeruginosa (strain DSM 24068 / PA7) (Pseudomonas aeruginosa (strain PA7)).